Here is an 881-residue protein sequence, read N- to C-terminus: Valine--tRNA ligase (881 aa).

Residues 49 to 59 (PNVTGKLHLGH) carry the 'HIGH' region motif. The short motif at 526-530 (KMSKS) is the 'KMSKS' region element. Residue K529 coordinates ATP. Positions 810 to 881 (LADLINLDEE…VRQRLADLEK (72 aa)) form a coiled coil.

This sequence belongs to the class-I aminoacyl-tRNA synthetase family. ValS type 1 subfamily. As to quaternary structure, monomer.

The protein resides in the cytoplasm. The enzyme catalyses tRNA(Val) + L-valine + ATP = L-valyl-tRNA(Val) + AMP + diphosphate. In terms of biological role, catalyzes the attachment of valine to tRNA(Val). As ValRS can inadvertently accommodate and process structurally similar amino acids such as threonine, to avoid such errors, it has a 'posttransfer' editing activity that hydrolyzes mischarged Thr-tRNA(Val) in a tRNA-dependent manner. In Bacillus thuringiensis subsp. konkukian (strain 97-27), this protein is Valine--tRNA ligase.